The chain runs to 109 residues: Phosphoribosyl-ATP pyrophosphatase (109 aa).

It belongs to the PRA-PH family.

The protein resides in the cytoplasm. It catalyses the reaction 1-(5-phospho-beta-D-ribosyl)-ATP + H2O = 1-(5-phospho-beta-D-ribosyl)-5'-AMP + diphosphate + H(+). The protein operates within amino-acid biosynthesis; L-histidine biosynthesis; L-histidine from 5-phospho-alpha-D-ribose 1-diphosphate: step 2/9. This chain is Phosphoribosyl-ATP pyrophosphatase, found in Geobacter metallireducens (strain ATCC 53774 / DSM 7210 / GS-15).